Reading from the N-terminus, the 273-residue chain is Large ribosomal subunit protein uL2 (273 aa).

The interval 228-273 (VDHPHGGGEGKTSGGRHPVTPWGFPTKGKKTRKNKRTSKFIVKKRK) is disordered. Over residues 254–273 (KGKKTRKNKRTSKFIVKKRK) the composition is skewed to basic residues.

This sequence belongs to the universal ribosomal protein uL2 family. As to quaternary structure, part of the 50S ribosomal subunit. Forms a bridge to the 30S subunit in the 70S ribosome.

Its function is as follows. One of the primary rRNA binding proteins. Required for association of the 30S and 50S subunits to form the 70S ribosome, for tRNA binding and peptide bond formation. It has been suggested to have peptidyltransferase activity; this is somewhat controversial. Makes several contacts with the 16S rRNA in the 70S ribosome. The protein is Large ribosomal subunit protein uL2 of Rickettsia massiliae (strain Mtu5).